The following is a 201-amino-acid chain: Small ribosomal subunit protein uS4c (201 aa).

Residues 20–43 (GLTSKRPRAGSDLRNQSRSGKRSQ) form a disordered region. An S4 RNA-binding domain is found at 89–149 (MRLDNILFRL…DEQKSRALIQ (61 aa)).

It belongs to the universal ribosomal protein uS4 family. In terms of assembly, part of the 30S ribosomal subunit. Contacts protein S5. The interaction surface between S4 and S5 is involved in control of translational fidelity.

It is found in the plastid. It localises to the chloroplast. Its function is as follows. One of the primary rRNA binding proteins, it binds directly to 16S rRNA where it nucleates assembly of the body of the 30S subunit. In terms of biological role, with S5 and S12 plays an important role in translational accuracy. This Buxus microphylla (Littleleaf boxwood) protein is Small ribosomal subunit protein uS4c (rps4).